We begin with the raw amino-acid sequence, 49 residues long: Large ribosomal subunit protein bL33B (49 aa).

Belongs to the bacterial ribosomal protein bL33 family.

The sequence is that of Large ribosomal subunit protein bL33B from Exiguobacterium sibiricum (strain DSM 17290 / CCUG 55495 / CIP 109462 / JCM 13490 / 255-15).